Consider the following 318-residue polypeptide: Homoserine kinase (318 aa).

97–107 (PIGSGLGSSAC) serves as a coordination point for ATP.

It belongs to the GHMP kinase family. Homoserine kinase subfamily.

Its subcellular location is the cytoplasm. The catalysed reaction is L-homoserine + ATP = O-phospho-L-homoserine + ADP + H(+). Its pathway is amino-acid biosynthesis; L-threonine biosynthesis; L-threonine from L-aspartate: step 4/5. Functionally, catalyzes the ATP-dependent phosphorylation of L-homoserine to L-homoserine phosphate. This chain is Homoserine kinase, found in Vibrio cholerae serotype O1 (strain ATCC 39541 / Classical Ogawa 395 / O395).